A 153-amino-acid chain; its full sequence is Bursicon (153 aa).

The signal sequence occupies residues 1-22 (MLLYHIVGASVLICLLNETAKA). Cystine bridges form between cysteine 29-cysteine 78, cysteine 43-cysteine 92, cysteine 53-cysteine 113, cysteine 57-cysteine 115, and cysteine 75-cysteine 118. One can recognise a CTCK domain in the interval 29–119 (CQATPVIHFL…PLECMCRPCT (91 aa)).

In terms of assembly, heterodimer of burs and pburs.

It is found in the secreted. Functionally, final heterodimeric neurohormone released at the end of the molting cycle, involved in the sclerotization (tanning) of the insect cuticle, melanization and wing spreading. This chain is Bursicon, found in Apis mellifera (Honeybee).